Consider the following 878-residue polypeptide: Alanine--tRNA ligase (878 aa).

Zn(2+)-binding residues include His-570, His-574, Cys-672, and His-676. Positions 844 to 864 (GGKGGGGRPDMAQAGGPDASA) are disordered. The span at 855 to 864 (AQAGGPDASA) shows a compositional bias: low complexity.

Belongs to the class-II aminoacyl-tRNA synthetase family. Requires Zn(2+) as cofactor.

The protein localises to the cytoplasm. It carries out the reaction tRNA(Ala) + L-alanine + ATP = L-alanyl-tRNA(Ala) + AMP + diphosphate. In terms of biological role, catalyzes the attachment of alanine to tRNA(Ala) in a two-step reaction: alanine is first activated by ATP to form Ala-AMP and then transferred to the acceptor end of tRNA(Ala). Also edits incorrectly charged Ser-tRNA(Ala) and Gly-tRNA(Ala) via its editing domain. The polypeptide is Alanine--tRNA ligase (Paramagnetospirillum magneticum (strain ATCC 700264 / AMB-1) (Magnetospirillum magneticum)).